Reading from the N-terminus, the 277-residue chain is Shikimate dehydrogenase (NADP(+)) (277 aa).

Shikimate is bound by residues 15–17 (SLS) and T62. K66 functions as the Proton acceptor in the catalytic mechanism. The shikimate site is built by N87 and D102. Residues 127–131 (GAGGA), 151–156 (NRTVDK), and I219 contribute to the NADP(+) site. Y221 lines the shikimate pocket. G242 contributes to the NADP(+) binding site.

The protein belongs to the shikimate dehydrogenase family. Homodimer.

The catalysed reaction is shikimate + NADP(+) = 3-dehydroshikimate + NADPH + H(+). The protein operates within metabolic intermediate biosynthesis; chorismate biosynthesis; chorismate from D-erythrose 4-phosphate and phosphoenolpyruvate: step 4/7. In terms of biological role, involved in the biosynthesis of the chorismate, which leads to the biosynthesis of aromatic amino acids. Catalyzes the reversible NADPH linked reduction of 3-dehydroshikimate (DHSA) to yield shikimate (SA). The protein is Shikimate dehydrogenase (NADP(+)) of Bacillus thuringiensis subsp. konkukian (strain 97-27).